The following is a 493-amino-acid chain: MEKYENLGLVGEGSYGMVMKCRNKDTGRIVAIKKFLESDDDKMVKKIAMREIKLLKQLRHENLVNLLEVCKKKKRWYLVFEFVDHTILDDLELFPNGLDYQVVQKYLFQIINGIGFCHSHNIIHRDIKPENILVSKSGVVKLCDFGFARTLAAPGEVYTDYVATRWYRAPELLVGDVKYGKAVDVWAIGCLVTEMFMGEPLFPGDSDIDQLYHIMMCLGNLIPRHQELFYKNPVFAGVRLPEIKEREPLERRYPKLSEVVIDLAKKCLHIDPDKRPFCAELLHHDFFQMDGFAERFSQELQLKVQKDARNVSLSKKSQNRKKEKEKDDSLGEERKTLVVQDTNADPKIKDCKLFKIKGSKIDGEKAEKGSRASNASCLHDSRTSHNKIVPSTSLKDCSNVSVDHTRNPSVAIPPLTHNLSAVAPGINSGMGTATIPIQGHRVDEKTKKCSIPFVKPNRHSPSGIYNINVTTLVSGPPLSDDSGADLPQMEHQH.

Residues 4–287 (YENLGLVGEG…CAELLHHDFF (284 aa)) form the Protein kinase domain. ATP-binding positions include 10-18 (VGEGSYGMV) and K33. The [NKR]KIAxRE motif lies at 45-51 (KKIAMRE). D126 functions as the Proton acceptor in the catalytic mechanism. Disordered stretches follow at residues 311-338 (VSLS…KTLV) and 363-384 (GEKA…SRTS). The span at 320–336 (RKKEKEKDDSLGEERKT) shows a compositional bias: basic and acidic residues.

Belongs to the protein kinase superfamily. CMGC Ser/Thr protein kinase family. CDC2/CDKX subfamily.

The protein localises to the cytoplasm. The protein resides in the nucleus. It carries out the reaction L-seryl-[protein] + ATP = O-phospho-L-seryl-[protein] + ADP + H(+). It catalyses the reaction L-threonyl-[protein] + ATP = O-phospho-L-threonyl-[protein] + ADP + H(+). The polypeptide is Cyclin-dependent kinase-like 2 (Pongo abelii (Sumatran orangutan)).